Here is a 344-residue protein sequence, read N- to C-terminus: tRNA(Ile)-lysidine synthase (344 aa).

Position 30-35 (30-35 (SGGQDS)) interacts with ATP. Residues 323–344 (PPPPAPVPPDPGERSPPPSPLY) form a disordered region.

This sequence belongs to the tRNA(Ile)-lysidine synthase family.

The protein resides in the cytoplasm. It catalyses the reaction cytidine(34) in tRNA(Ile2) + L-lysine + ATP = lysidine(34) in tRNA(Ile2) + AMP + diphosphate + H(+). Ligates lysine onto the cytidine present at position 34 of the AUA codon-specific tRNA(Ile) that contains the anticodon CAU, in an ATP-dependent manner. Cytidine is converted to lysidine, thus changing the amino acid specificity of the tRNA from methionine to isoleucine. The chain is tRNA(Ile)-lysidine synthase from Thermosynechococcus vestitus (strain NIES-2133 / IAM M-273 / BP-1).